A 2207-amino-acid polypeptide reads, in one-letter code: Desmoplakin-B (2207 aa).

Coiled-coil stretches lie at residues 506–916 (MEEL…EAGK), 952–1000 (AKHA…EQGR), and 1029–1063 (TERLQRLTETLTKDRQRVEEELRAVRLEHEELLKN). The span at 905–924 (KQRQVAEEEAGKRRRTESQL) shows a compositional bias: basic and acidic residues. The segment at 905 to 933 (KQRQVAEEEAGKRRRTESQLEKSSQAMRE) is disordered. 9 Plectin repeats span residues 1369–1406 (LLEAQAATGYIIDPQANTKMTVEEACLNGVVDEADKKQ), 1407–1445 (LLIAEAACVGFRDPKTAKLLPVSQAMKKGIIDRETTLRL), 1446–1483 (LQAQEAAGGILDPILSVYLPKDTAMDRDLVDEDLYQAL), 1571–1609 (YLRGSTCIAGIYDEAGECTLPIYQAMKNGLLRPGTTLEL), 1610–1647 (LEAQAASGFVIDPINNEYYTVEEACQKGLVGVEFKDKL), 1685–1723 (LLEAQIASGGIIDPKHSHRIDVDVAYQRGYFDQGMNQIL), 1783–1811 (IVDPDSNKEMTVREAYEKKLIDYETFLEL), 1992–2029 (LLEAQACTGGIVSPDNGRRMSIQEATRVGVLDDEMANR), and 2068–2106 (FLEFQYLTGGLFDPELGCRRSLEEALQMGWLDMRAAQRL). The segment covering 2155-2164 (ISSPYNLSNP) has biased composition (polar residues). The tract at residues 2155-2207 (ISSPYNLSNPGSASGSRSGSRRGSVDYSLSPSSSSRYSSFSYSRTSFSSRSLS) is disordered. Over residues 2165 to 2207 (GSASGSRSGSRRGSVDYSLSPSSSSRYSSFSYSRTSFSSRSLS) the composition is skewed to low complexity.

Belongs to the plakin or cytolinker family.

The protein resides in the cell junction. It localises to the desmosome. Its subcellular location is the cell membrane. Involved in the organization of desmosome cell-cell junctions. Of particular importance in cell adhesion in the skin and during cardiac development. May also play a role in the regulation of Wnt, TGF-beta and Hippo signaling pathways. This is Desmoplakin-B from Danio rerio (Zebrafish).